The chain runs to 348 residues: Bifunctional nitrilase/nitrile hydratase NIT4B (348 aa).

One can recognise a CN hydrolase domain in the interval 29–300 (VRATVVQAST…EALISADLDL (272 aa)). The active-site Proton acceptor is Glu69. The Proton donor role is filled by Lys156. Residue Cys190 is the Nucleophile of the active site.

It belongs to the carbon-nitrogen hydrolase superfamily. Nitrilase family. As to expression, expressed in roots, stems, cotyledons, leaves and flowers.

It carries out the reaction a nitrile + 2 H2O = a carboxylate + NH4(+). It catalyses the reaction 3-cyano-L-alanine + 2 H2O = L-aspartate + NH4(+). Its function is as follows. Highly specific for beta-cyano-L-alanine (Ala(CN)). Low activity with 3-phenylpropionitrile (PPN). Not associated with auxin production but may be involved in cyanide detoxification. This Nicotiana tabacum (Common tobacco) protein is Bifunctional nitrilase/nitrile hydratase NIT4B (NIT4B).